We begin with the raw amino-acid sequence, 283 residues long: Quinate/shikimate dehydrogenase (NAD(+)) (283 aa).

Shikimate contacts are provided by S17, T69, K73, N94, and D110. L-quinate contacts are provided by residues 17–19 (SRT), T69, K73, N94, and D110. The active-site Proton acceptor is K73. NAD(+) contacts are provided by residues 137–138 (GV), D158, R163, 203–206 (PMGM), A213, V228, and G251. Q258 is a binding site for shikimate. An L-quinate-binding site is contributed by Q258.

Belongs to the shikimate dehydrogenase family. As to quaternary structure, homodimer.

The catalysed reaction is L-quinate + NAD(+) = 3-dehydroquinate + NADH + H(+). It carries out the reaction shikimate + NAD(+) = 3-dehydroshikimate + NADH + H(+). It functions in the pathway metabolic intermediate biosynthesis; chorismate biosynthesis; chorismate from D-erythrose 4-phosphate and phosphoenolpyruvate: step 4/7. It participates in aromatic compound metabolism; 3,4-dihydroxybenzoate biosynthesis; 3-dehydroquinate from D-quinate (NAD(+) route). Involved in the biosynthesis of the chorismate, which leads to the biosynthesis of aromatic amino acids, and plays a key role in the quinate degradation pathway. Catalyzes the NAD(+)-dependent oxidation of both quinate and shikimate to 3-dehydroquinate and 3-dehydroshikimate, respectively. This is Quinate/shikimate dehydrogenase (NAD(+)) from Corynebacterium glutamicum (strain R).